We begin with the raw amino-acid sequence, 413 residues long: Snake venom metalloproteinase AaPA (413 aa).

The signal sequence occupies residues 1-20; it reads MIQVLLVTICLAAFPYQGSS. Positions 21-189 are excised as a propeptide; sequence IILESGKVND…KKASQLIVST (169 aa). Residues 193 to 390 enclose the Peptidase M12B domain; sequence RYMEIVIVVD…ENPPCILNKP (198 aa). Ca(2+)-binding residues include E196 and D280. 3 disulfide bridges follow: C304–C385, C344–C369, and C346–C352. Residue H329 coordinates Zn(2+). The active site involves E330. 2 residues coordinate Zn(2+): H333 and H339. Positions 385, 388, 400, 403, 405, 407, and 413 each coordinate Ca(2+). Residues 391–413 constitute a propeptide that is removed on maturation; sequence LRTDTVSTPVSGNELLEAEKDYD.

The protein belongs to the venom metalloproteinase (M12B) family. P-I subfamily. As to quaternary structure, monomer. Requires Zn(2+) as cofactor. As to expression, expressed by the venom gland.

The protein localises to the secreted. Functionally, snake venom zinc metalloprotease that may activate prothrombin. The chain is Snake venom metalloproteinase AaPA from Deinagkistrodon acutus (Hundred-pace snake).